A 1027-amino-acid chain; its full sequence is Circadian locomoter output cycles protein kaput (1027 aa).

The bHLH domain maps to 15-65 (LCRKSRNLSEKKRRDQFNSLVNDLSALISTSSRKMDKSTVLKSTIAFLKNH). PAS domains lie at 88-160 (NDEY…VIEP) and 255-321 (REMS…ELRQ). Disordered stretches follow at residues 377-402 (RKEG…ASTG), 443-575 (TSPA…QQLQ), 765-800 (QQMM…TQQQ), 869-911 (TINP…NNED), and 926-1027 (SINF…GSSQ). A compositionally biased stretch (low complexity) spans 383-402 (SGNSNSITNNGSSKVIASTG). The segment covering 443 to 486 (TSPAVDSSPMWSASAVQPSGSCQINPLKTSRPASSYGNISSTGI) has biased composition (polar residues). 2 stretches are compositionally biased toward low complexity: residues 504-516 (SDST…SVTS) and 552-575 (QQQQ…QQLQ). Positions 780 to 1027 (QHNLQQQHQS…SPHTAPGSSQ (248 aa)) are implicated in the circadian rhythmicity. Composition is skewed to low complexity over residues 871–909 (NPFN…QNNN) and 951–995 (SGSN…NQNQ). Residues 1006-1027 (QMSQEQSQNLFNSPHTAPGSSQ) show a composition bias toward polar residues.

Efficient DNA binding requires dimerization with another bHLH protein. Forms a heterodimer with Cycle. As to expression, widely expressed. Found in head, body, and appendage fractions.

It is found in the nucleus. Its function is as follows. Circadian regulator that acts as a transcription factor and generates a rhythmic output with a period of about 24 hours. Oscillates in antiphase to the cycling observed for period (PER) and timeless (TIM). According to PubMed:9742131, reaches peak abundance within several hours of the dark-light transition at ZT0 (zeitgeber 0), whereas PubMed:9616122 describes bimodal oscillating expression with maximum at ZT5 and ZT23. Clock-cycle heterodimers activate cycling transcription of PER and TIM by binding to the E-box (5'-CACGTG-3') present in their promoters. Once induced, Period and Timeless block Clock's ability to transactivate their promoters. This Drosophila melanogaster (Fruit fly) protein is Circadian locomoter output cycles protein kaput (Clk).